A 457-amino-acid chain; its full sequence is Multidrug resistance protein MdtK (457 aa).

Helical transmembrane passes span 11–31 (LLAL…MGFV), 53–73 (IWLP…PVIA), 93–113 (WLAG…GYII), 127–147 (AVGY…FQVA), 160–180 (GMVM…IFIY), 188–208 (LGGI…FIAM), 243–263 (LPIA…ALLV), 276–296 (IALN…AAVT), 314–334 (AART…IFTV), 350–370 (VVAL…SDSI), 387–407 (IFFI…YILA), and 418–438 (PAGF…LMML).

Belongs to the multi antimicrobial extrusion (MATE) (TC 2.A.66.1) family. MdtK subfamily.

The protein resides in the cell inner membrane. Multidrug efflux pump that functions probably as a Na(+)/drug antiporter. In Salmonella newport (strain SL254), this protein is Multidrug resistance protein MdtK.